Consider the following 351-residue polypeptide: DNA polymerase IV (351 aa).

Residues 4–185 form the UmuC domain; the sequence is IIHVDMDCFF…LPLAKIPGVG (182 aa). Mg(2+) contacts are provided by Asp8 and Asp103. Residue Glu104 is part of the active site.

This sequence belongs to the DNA polymerase type-Y family. In terms of assembly, monomer. The cofactor is Mg(2+).

Its subcellular location is the cytoplasm. The enzyme catalyses DNA(n) + a 2'-deoxyribonucleoside 5'-triphosphate = DNA(n+1) + diphosphate. Its function is as follows. Poorly processive, error-prone DNA polymerase involved in untargeted mutagenesis. Copies undamaged DNA at stalled replication forks, which arise in vivo from mismatched or misaligned primer ends. These misaligned primers can be extended by PolIV. Exhibits no 3'-5' exonuclease (proofreading) activity. May be involved in translesional synthesis, in conjunction with the beta clamp from PolIII. This Escherichia coli O1:K1 / APEC protein is DNA polymerase IV.